Here is a 130-residue protein sequence, read N- to C-terminus: Small ribosomal subunit protein uS8 (130 aa).

This sequence belongs to the universal ribosomal protein uS8 family. Part of the 30S ribosomal subunit.

One of the primary rRNA binding proteins, it binds directly to 16S rRNA central domain where it helps coordinate assembly of the platform of the 30S subunit. This is Small ribosomal subunit protein uS8 from Methanococcus maripaludis (strain C5 / ATCC BAA-1333).